The primary structure comprises 268 residues: MTLLNVSGLSHHYAHGGFSGKHQHQAVLNNVSLTLKSGETVALLGRSGCGKSTLARLLVGLESPSQGNISWRGESLAKLNRAQRKAFRRDIQMVFQDSISAVNPRKTVREILREPMRHLLSLKKSEQLARASEMLKAVDLDDSVLDKRPPQLSGGQLQRVCLARALAVEPKLLILDETVSNLDLVLQAGVIRLLKKLQQQFGTACLFITHDLRLVERFCQRVMVMDNGQIVETQAVGDKLTFSSDAGRVLQNAVLPAFPVRRRATEKV.

One can recognise an ABC transporter domain in the interval 4–252; that stretch reads LNVSGLSHHY…SSDAGRVLQN (249 aa). 45–52 serves as a coordination point for ATP; it reads GRSGCGKS.

This sequence belongs to the ABC transporter superfamily. Nickel importer (TC 3.A.1.5.3) family. In terms of assembly, the complex is composed of two ATP-binding proteins (NikD and NikE), two transmembrane proteins (NikB and NikC) and a solute-binding protein (NikA).

Its subcellular location is the cell inner membrane. The catalysed reaction is Ni(2+)(out) + ATP + H2O = Ni(2+)(in) + ADP + phosphate + H(+). Part of the ABC transporter complex NikABCDE involved in nickel import. Responsible for energy coupling to the transport system. The protein is Nickel import ATP-binding protein NikE of Shigella boydii serotype 4 (strain Sb227).